A 246-amino-acid chain; its full sequence is Exosome complex component SKI6 (246 aa).

The protein belongs to the RNase PH family. As to quaternary structure, component of the RNA exosome complex. Specifically part of the catalytically inactive RNA exosome core complex (Exo-9) which may associate with the catalytic subunits RRP6 and DIS3 in cytoplasmic- and nuclear-specific RNA exosome complex forms. Exo-9 is formed by a hexameric base ring of RNase PH domain-containing subunits and a cap ring consisting of CSL4, RRP4 and RRP40.

It localises to the cytoplasm. The protein localises to the nucleus. It is found in the nucleolus. In terms of biological role, non-catalytic component of the RNA exosome complex which has 3'-&gt;5' exoribonuclease activity and participates in a multitude of cellular RNA processing and degradation events. In the nucleus, the RNA exosome complex is involved in proper maturation of stable RNA species such as rRNA, snRNA and snoRNA, in the elimination of RNA processing by-products and non-coding 'pervasive' transcripts, such as antisense RNA species and cryptic unstable transcripts (CUTs), and of mRNAs with processing defects, thereby limiting or excluding their export to the cytoplasm. In the cytoplasm, the RNA exosome complex is involved in general mRNA turnover and in RNA surveillance pathways, preventing translation of aberrant mRNAs. The catalytic inactive RNA exosome core complex of 9 subunits (Exo-9) is proposed to play a pivotal role in the binding and presentation of RNA for ribonucleolysis, and to serve as a scaffold for the association with catalytic subunits and accessory proteins or complexes. SKI6 is part of the hexameric ring of RNase PH domain-containing subunits proposed to form a central channel which threads RNA substrates for degradation. The sequence is that of Exosome complex component SKI6 (SKI6) from Saccharomyces cerevisiae (strain ATCC 204508 / S288c) (Baker's yeast).